The following is a 189-amino-acid chain: Threonylcarbamoyl-AMP synthase (189 aa).

Residues 7–189 (NFTVKGLTEQ…DAITGKIIRK (183 aa)) enclose the YrdC-like domain.

Belongs to the SUA5 family. TsaC subfamily.

It is found in the cytoplasm. The enzyme catalyses L-threonine + hydrogencarbonate + ATP = L-threonylcarbamoyladenylate + diphosphate + H2O. Functionally, required for the formation of a threonylcarbamoyl group on adenosine at position 37 (t(6)A37) in tRNAs that read codons beginning with adenine. Catalyzes the conversion of L-threonine, HCO(3)(-)/CO(2) and ATP to give threonylcarbamoyl-AMP (TC-AMP) as the acyladenylate intermediate, with the release of diphosphate. This Blochmanniella floridana protein is Threonylcarbamoyl-AMP synthase.